The sequence spans 719 residues: Solute carrier family 15 member 2 (719 aa).

Topologically, residues 1-43 are cytoplasmic; the sequence is MGKMKDKDVDAEKYEKAQRSPKLCGTNYPVSIAFIVVNEFCER. Residues 44-61 traverse the membrane as a helical segment; sequence FSYYGMKAVLTLYFMNYL. Residues 62–69 are Extracellular-facing; the sequence is HWDKNLST. N-linked (GlcNAc...) asparagine glycosylation is present at Asn66. A helical transmembrane segment spans residues 70–90; that stretch reads AIYHAFSGLCYFTPLLGALIA. The Cytoplasmic segment spans residues 91–99; sequence DSWLGKFKT. A helical membrane pass occupies residues 100–120; it reads IIYLSIVYVIGHVVKSVGAIP. Residues 121 to 125 lie on the Extracellular side of the membrane; that stretch reads DVGDS. Residues 126–146 traverse the membrane as a helical segment; it reads TVHIALSMVGLGLIALGTGGI. The Cytoplasmic portion of the chain corresponds to 147–169; sequence KPCVAAFGGDQFDEDNIDERRKF. A helical membrane pass occupies residues 170–190; it reads FSIFYMSINAGSVLSTIITPI. Topologically, residues 191-201 are extracellular; it reads LRGDVQCFGGD. A helical membrane pass occupies residues 202–222; the sequence is CYALAFGVPAALMVIALVVFI. The Cytoplasmic segment spans residues 223-280; that stretch reads SGSGLYKKSPPEGNVLVRVCKCIGFAISNRWTNSKKSPKRSHWLDWAEEKYSKRLIQE. A helical transmembrane segment spans residues 281-301; it reads IKMVCRVLVLYIPLPMFWALF. The Extracellular portion of the chain corresponds to 302–334; sequence DQQGSRWTLQATRMNMDFGGGFIIKPDQMQMLN. The chain crosses the membrane as a helical span at residues 335–355; sequence ALLILVFIPIFDMGIYPLVGL. Residues 356 to 367 lie on the Cytoplasmic side of the membrane; sequence CRIKLTPLKKMA. Residues 368–388 form a helical membrane-spanning segment; sequence TGMILAALAFCAATAVEVYVI. Over 389–594 the chain is Extracellular; the sequence is KTVVEPPPAK…QANNIHIGWQ (206 aa). The segment at 389 to 594 is extracellular domain (ECD); that stretch reads KTVVEPPPAK…QANNIHIGWQ (206 aa). N-linked (GlcNAc...) asparagine glycans are attached at residues Asn481, Asn513, and Asn532. The chain crosses the membrane as a helical span at residues 595 to 615; sequence IPQYVFLTAGEVMFSITGLEF. At 616-626 the chain is on the cytoplasmic side; that stretch reads SYSQAPASMKS. The chain crosses the membrane as a helical span at residues 627–647; it reads VLQAGWLMTVAFGNVIVLIVA. Residues 648 to 657 are Extracellular-facing; sequence EGAGMEQWVE. Residues 658–678 traverse the membrane as a helical segment; that stretch reads FLLFAALLVAVSIIFSIMAYF. Residues 679–719 are Cytoplasmic-facing; the sequence is YTYVDPDQLDKLFKEDGDGGKVESSKKDELSLGDMPKQTKM. Basic and acidic residues predominate over residues 695-708; it reads GDGGKVESSKKDEL. Residues 695-719 are disordered; that stretch reads GDGGKVESSKKDELSLGDMPKQTKM.

The protein belongs to the major facilitator superfamily. Proton-dependent oligopeptide transporter (POT/PTR) (TC 2.A.17) family. In terms of tissue distribution, expressed in kidney, brain and gut. Also expressed weakly in eye, gill and skeletal muscle.

The protein localises to the apical cell membrane. The protein resides in the cytoplasmic vesicle. It is found in the phagosome membrane. Its subcellular location is the cell membrane. The catalysed reaction is a dipeptide(out) + 2 H(+)(out) = a dipeptide(in) + 2 H(+)(in). The enzyme catalyses N-acetyl-D-muramoyl-L-alanyl-D-isoglutamine(out) + 3 H(+)(out) = N-acetyl-D-muramoyl-L-alanyl-D-isoglutamine(in) + 3 H(+)(in). It carries out the reaction glycyl-L-leucine(out) + 2 H(+)(out) = glycyl-L-leucine(in) + 2 H(+)(in). It catalyses the reaction glycyl-L-lysine(out) + 2 H(+)(out) = glycyl-L-lysine(in) + 2 H(+)(in). The catalysed reaction is glycyl-L-glutamate(out) + 3 H(+)(out) = glycyl-L-glutamate(in) + 3 H(+)(in). The enzyme catalyses L-alanyl-L-alanine(out) + 2 H(+)(out) = L-alanyl-L-alanine(in) + 2 H(+)(in). It carries out the reaction an L-amino acid tripeptide(out) + 2 H(+)(out) = an L-amino acid tripeptide(in) + 2 H(+)(in). It catalyses the reaction carnosine(out) + 2 H(+)(out) = carnosine(in) + 2 H(+)(in). Proton-coupled amino-acid transporter that transports oligopeptides of 2 to 4 amino acids with a preference for dipeptides. Transports neutral and anionic dipeptides with a proton to peptide stoichiometry of 2:1 or 3:1. This chain is Solute carrier family 15 member 2, found in Danio rerio (Zebrafish).